The primary structure comprises 102 residues: Peptide chaperone MftB (102 aa).

The protein belongs to the peptide chaperone MftB family.

Functionally, peptide chaperone involved in the biosynthesis of the enzyme cofactor mycofactocin (MFT). Binds MftA and MftC with high affinity, and is essential for MftC activity on MftA, likely via the formation of a ternary complex. Is required for the in vivo ethanol assimilation in M.smegmatis. The polypeptide is Peptide chaperone MftB (Mycolicibacterium smegmatis (strain ATCC 700084 / mc(2)155) (Mycobacterium smegmatis)).